The primary structure comprises 199 residues: Inner membrane protein E199L (199 aa).

A helical membrane pass occupies residues 150–170 (INVMNHPFLTLILIILILIII).

Belongs to the asfivirus E199L family. In terms of assembly, interacts with host PYCR2; this interaction results in autophagy activation. In terms of processing, contains intramolecular disulfide bonds.

Its subcellular location is the virion membrane. It is found in the host membrane. Essential for viral fusion with host endosomal membrane and core release. Not required for virus morphogenesis and egress. Induces complete autophagy through the interaction with and down-regulation of host PYCR2. The chain is Inner membrane protein E199L from Ornithodoros (relapsing fever ticks).